The primary structure comprises 480 residues: F-box only protein 3 (480 aa).

In terms of domain architecture, F-box spans leucine 10–histidine 56. The region spanning valine 278–valine 408 is the ApaG domain. Residues glutamate 419 to glutamate 458 are compositionally biased toward acidic residues. Positions glutamate 419–arginine 463 are disordered.

As to quaternary structure, part of a SCF (SKP1-cullin-F-box) protein ligase complex SCF(FBXO3) consisting of FBXO3, SKP1, CUL1 and RBX1. Interacts with PML, interaction is direct and takes place either alone or within the SCF complex.

The protein resides in the nucleus. The protein operates within protein modification; protein ubiquitination. Its function is as follows. Substrate recognition component of the SCF (SKP1-CUL1-F-box protein)-type E3 ubiquitin ligase complex, SCF(FBXO3), which mediates the ubiquitination and subsequent proteasomal degradation of target proteins. Mediates the ubiquitination of HIPK2 and probably that of EP300, leading to rapid degradation by the proteasome. In the presence of PML, HIPK2 ubiquitination still occurs, but degradation is prevented. PML, HIPK2 and FBXO3 may act synergically to activate p53/TP53-dependent transactivation. The SCF(FBXO3) also acts as a regulator of inflammation by mediating ubiquitination and degradation of FBXL2: specifically recognizes FBXL2 phosphorylated at 'Thr-404' and promotes its ubiquitination. In Mus musculus (Mouse), this protein is F-box only protein 3 (Fbxo3).